The sequence spans 370 residues: Mitogen-activated protein kinase 3 (370 aa).

Residues 32-319 (YVPIKPIGRG…VTEALEHPYM (288 aa)) form the Protein kinase domain. Residues 38–46 (IGRGAYGIV) and Lys61 each bind ATP. Asp158 acts as the Proton acceptor in catalysis. Thr191 carries the phosphothreonine modification. The TXY signature appears at 191-193 (TEY). Tyr193 is subject to Phosphotyrosine.

It belongs to the protein kinase superfamily. CMGC Ser/Thr protein kinase family. MAP kinase subfamily. Post-translationally, dually phosphorylated on Thr-191 and Tyr-193, which activates the enzyme.

It catalyses the reaction L-seryl-[protein] + ATP = O-phospho-L-seryl-[protein] + ADP + H(+). The enzyme catalyses L-threonyl-[protein] + ATP = O-phospho-L-threonyl-[protein] + ADP + H(+). Activated by threonine and tyrosine phosphorylation. In Oryza sativa subsp. japonica (Rice), this protein is Mitogen-activated protein kinase 3 (MPK3).